Reading from the N-terminus, the 352-residue chain is DNA polymerase IV (352 aa).

The UmuC domain occupies 3 to 187 (VLFVDFDYFY…LDIADVPGIG (185 aa)). Residues aspartate 7 and aspartate 105 each contribute to the Mg(2+) site. Glutamate 106 is an active-site residue.

This sequence belongs to the DNA polymerase type-Y family. Monomer. Interacts with the PCNA heterotrimer via PCNA1. It depends on Mg(2+) as a cofactor.

It is found in the cytoplasm. The enzyme catalyses DNA(n) + a 2'-deoxyribonucleoside 5'-triphosphate = DNA(n+1) + diphosphate. In terms of biological role, poorly processive, error-prone DNA polymerase involved in untargeted mutagenesis. Copies undamaged DNA at stalled replication forks, which arise in vivo from mismatched or misaligned primer ends. These misaligned primers can be extended by PolIV. Exhibits no 3'-5' exonuclease (proofreading) activity. It is involved in translesional synthesis. The polypeptide is DNA polymerase IV (dbh) (Saccharolobus solfataricus (strain ATCC 35092 / DSM 1617 / JCM 11322 / P2) (Sulfolobus solfataricus)).